Reading from the N-terminus, the 477-residue chain is Endo-1,4-beta-xylanase A (477 aa).

Residues 1–41 (MGSYALPRSGVRRSIRVLLLALVVGVLGTATALIAPPGAHA) form the signal peptide. One can recognise a GH10 domain in the interval 42–340 (AESTLGAAAA…KAAYTAVLDA (299 aa)). The Proton donor role is filled by Glu169. Glu277 acts as the Nucleophile in catalysis. Residues 361-477 (SGRCLDVPDA…NGSNQRWTRT (117 aa)) enclose the Ricin B-type lectin domain. Cystine bridges form between Cys364-Cys383, Cys406-Cys423, and Cys447-Cys466.

Belongs to the glycosyl hydrolase 10 (cellulase F) family.

Its subcellular location is the secreted. The catalysed reaction is Endohydrolysis of (1-&gt;4)-beta-D-xylosidic linkages in xylans.. Its pathway is glycan degradation; xylan degradation. In terms of biological role, contributes to hydrolyze hemicellulose, the major component of plant cell-walls. XLNA and XLNB seem to act sequentially on the substrate to yield xylobiose and xylose as carbon sources. This chain is Endo-1,4-beta-xylanase A (xlnA), found in Streptomyces lividans.